An 833-amino-acid polypeptide reads, in one-letter code: Multiphosphoryl transfer protein 2 (833 aa).

One can recognise an HPr domain in the interval 2-91 (ALIVEFICEL…QWLRDEFPHC (90 aa)). H16 acts as the Tele-phosphohistidine intermediate; for HPr activity in catalysis. Residue H16 is modified to Phosphohistidine; by EI. Residues 143-653 (LGNLPAAKGV…AAKARMAQLD (511 aa)) form a PTS EI region. The Tele-phosphohistidine intermediate; for PTS EI activity role is filled by H301. At H301 the chain carries Phosphohistidine; by autocatalysis. Phosphoenolpyruvate is bound by residues R408 and R444. The Mg(2+) site is built by E543 and D567. Phosphoenolpyruvate is bound by residues 566–567 (ND) and R577. Catalysis depends on C614, which acts as the Proton donor; for EI activity. The 143-residue stretch at 688 to 830 (PLVTAECITL…DAIASLLQHE (143 aa)) folds into the PTS EIIA type-2 domain. H750 functions as the Tele-phosphohistidine intermediate; for PTS EIIA activity in the catalytic mechanism. Phosphohistidine; by HPr is present on H750.

Belongs to the PEP-utilizing enzyme family. Mg(2+) is required as a cofactor.

The protein localises to the cytoplasm. It carries out the reaction L-histidyl-[protein] + phosphoenolpyruvate = N(pros)-phospho-L-histidyl-[protein] + pyruvate. The catalysed reaction is D-fructose(out) + N(pros)-phospho-L-histidyl-[protein] = D-fructose 1-phosphate(in) + L-histidyl-[protein]. In terms of biological role, multifunctional protein that includes general (non sugar-specific) and sugar-specific components of the phosphoenolpyruvate-dependent sugar phosphotransferase system (sugar PTS). This major carbohydrate active transport system catalyzes the phosphorylation of incoming sugar substrates concomitantly with their translocation across the cell membrane. The enzyme II FrwABC PTS system is involved in fructose transport. The protein is Multiphosphoryl transfer protein 2 of Escherichia coli (strain K12).